Reading from the N-terminus, the 444-residue chain is Glutamate--methylamine ligase (444 aa).

Residues 14-97 enclose the GS beta-grasp domain; the sequence is HHVKYVLAQF…LVCDGHVNGK (84 aa). One can recognise a GS catalytic domain in the interval 103–444; sequence TRVVLKQQIA…WEINRYVQFY (342 aa).

Belongs to the glutamine synthetase family. Type 3 subfamily. Mg(2+) is required as a cofactor.

The enzyme catalyses methylamine + L-glutamate + ATP = N(5)-methyl-L-glutamine + ADP + phosphate + H(+). It carries out the reaction ethylamine + L-glutamate + ATP = N(5)-ethyl-L-glutamine + ADP + phosphate + H(+). With respect to regulation, formation of theanine is repressed by a high concentration of glutamic acid. Functionally, catalyzes the formation of N(5)-methyl-L-glutamine from glutamate and methylamine. In vitro, can also use ethylamine, hydroxylamine and ammonia, with 75%, 40% and 1% activity compared to methylamine, respectively. The sequence is that of Glutamate--methylamine ligase from Methylovorus mays.